The sequence spans 317 residues: Phospho-N-acetylmuramoyl-pentapeptide-transferase (317 aa).

Helical transmembrane passes span 6–26, 52–72, 78–98, 114–134, 145–165, 171–191, 194–214, 223–244, and 297–317; these read IVMA…IIIP, PTIG…IMVG, AMIA…DDLL, MILL…YIGT, INFG…VTNA, GLDG…GIIS, LGHI…LAFL, VFMG…ALIL, and KIVS…FASL.

Belongs to the glycosyltransferase 4 family. MraY subfamily. Mg(2+) serves as cofactor.

It is found in the cell membrane. It carries out the reaction UDP-N-acetyl-alpha-D-muramoyl-L-alanyl-gamma-D-glutamyl-meso-2,6-diaminopimeloyl-D-alanyl-D-alanine + di-trans,octa-cis-undecaprenyl phosphate = di-trans,octa-cis-undecaprenyl diphospho-N-acetyl-alpha-D-muramoyl-L-alanyl-D-glutamyl-meso-2,6-diaminopimeloyl-D-alanyl-D-alanine + UMP. The protein operates within cell wall biogenesis; peptidoglycan biosynthesis. Catalyzes the initial step of the lipid cycle reactions in the biosynthesis of the cell wall peptidoglycan: transfers peptidoglycan precursor phospho-MurNAc-pentapeptide from UDP-MurNAc-pentapeptide onto the lipid carrier undecaprenyl phosphate, yielding undecaprenyl-pyrophosphoryl-MurNAc-pentapeptide, known as lipid I. This Clostridium perfringens (strain 13 / Type A) protein is Phospho-N-acetylmuramoyl-pentapeptide-transferase.